We begin with the raw amino-acid sequence, 450 residues long: Putative receptor-like protein kinase At1g72540 (450 aa).

T73 is subject to Phosphothreonine. Positions 84-365 (FSKYNFLGEG…TVVKTLEPIL (282 aa)) constitute a Protein kinase domain. Residues 90–98 (LGEGGFGEV) and K119 each bind ATP. Y164 bears the Phosphotyrosine mark. Catalysis depends on D214, which acts as the Proton acceptor. S218 carries the phosphoserine modification. T254 carries the post-translational modification Phosphothreonine. Y262 carries the post-translational modification Phosphotyrosine.

Belongs to the protein kinase superfamily. Ser/Thr protein kinase family.

The enzyme catalyses L-seryl-[protein] + ATP = O-phospho-L-seryl-[protein] + ADP + H(+). The catalysed reaction is L-threonyl-[protein] + ATP = O-phospho-L-threonyl-[protein] + ADP + H(+). In Arabidopsis thaliana (Mouse-ear cress), this protein is Putative receptor-like protein kinase At1g72540.